The sequence spans 126 residues: DNA-directed RNA polymerase I subunit RPA12 (126 aa).

The Zn(2+) site is built by Cys20, Cys23, Cys38, Cys41, Cys87, and Cys90. Residues 20 to 41 (CSDCGSVLPLPGAQDTVTCIRC) form a C4-type zinc finger. A TFIIS-type zinc finger spans residues 83-123 (VDRRCPRCGHEGMAYHTRQMRSADEGQTVFYTCTNCKFQEK). The Hairpin motif lies at 106–107 (DE). Zn(2+)-binding residues include Cys115 and Cys118.

The protein belongs to the archaeal RpoM/eukaryotic RPA12/RPB9/RPC11 RNA polymerase family. In terms of assembly, component of the RNA polymerase I (Pol I) complex consisting of 13 subunits: a ten-subunit catalytic core composed of POLR1A/RPA1, POLR1B/RPA2, POLR1C/RPAC1, POLR1D/RPAC2, POLR1H/RPA12, POLR2E/RPABC1, POLR2F/RPABC2, POLR2H/RPABC3, POLR2K/RPABC4 and POLR2L/RPABC5; a mobile stalk subunit POLR1F/RPA43 protruding from the core and additional subunits homologous to general transcription factors POLR1E/RPA49 and POLR1G/RPA34. Part of Pol I pre-initiation complex (PIC), in which Pol I core assembles with RRN3 and promoter-bound UTBF and SL1/TIF-IB complex.

It is found in the nucleus. The protein localises to the nucleolus. In terms of biological role, core component of RNA polymerase I (Pol I), a DNA-dependent RNA polymerase which synthesizes ribosomal RNA precursors using the four ribonucleoside triphosphates as substrates. Can mediate Pol I proofreading of the nascent RNA transcript. Anchors into the Pol I active site to monitor transcription fidelity and cleave mis-incorporated 5'-ribonucleotides. The chain is DNA-directed RNA polymerase I subunit RPA12 from Homo sapiens (Human).